Consider the following 398-residue polypeptide: L-glutamine--4-(methylsulfanyl)-2-oxobutanoate aminotransferase (398 aa).

Residue lysine 240 is modified to N6-(pyridoxal phosphate)lysine.

Belongs to the class-I pyridoxal-phosphate-dependent aminotransferase family. MtnE subfamily. The cofactor is pyridoxal 5'-phosphate.

The catalysed reaction is 4-methylsulfanyl-2-oxobutanoate + L-glutamine = 2-oxoglutaramate + L-methionine. The protein operates within amino-acid biosynthesis; L-methionine biosynthesis via salvage pathway; L-methionine from S-methyl-5-thio-alpha-D-ribose 1-phosphate: step 6/6. Functionally, involved in the methylthioribose (MTR) recycling pathway. Catalyzes the formation of methionine from 2-keto-4-methylthiobutyrate (KMTB). In Bacillus subtilis (strain 168), this protein is L-glutamine--4-(methylsulfanyl)-2-oxobutanoate aminotransferase.